The following is a 251-amino-acid chain: tRNA1(Val) (adenine(37)-N6)-methyltransferase (251 aa).

This sequence belongs to the methyltransferase superfamily. tRNA (adenine-N(6)-)-methyltransferase family.

The protein resides in the cytoplasm. The catalysed reaction is adenosine(37) in tRNA1(Val) + S-adenosyl-L-methionine = N(6)-methyladenosine(37) in tRNA1(Val) + S-adenosyl-L-homocysteine + H(+). In terms of biological role, specifically methylates the adenine in position 37 of tRNA(1)(Val) (anticodon cmo5UAC). In Shewanella frigidimarina (strain NCIMB 400), this protein is tRNA1(Val) (adenine(37)-N6)-methyltransferase.